The sequence spans 124 residues: Small ribosomal subunit protein uS12 (124 aa).

Aspartate 89 is modified (3-methylthioaspartic acid).

It belongs to the universal ribosomal protein uS12 family. Part of the 30S ribosomal subunit. Contacts proteins S8 and S17. May interact with IF1 in the 30S initiation complex.

Functionally, with S4 and S5 plays an important role in translational accuracy. In terms of biological role, interacts with and stabilizes bases of the 16S rRNA that are involved in tRNA selection in the A site and with the mRNA backbone. Located at the interface of the 30S and 50S subunits, it traverses the body of the 30S subunit contacting proteins on the other side and probably holding the rRNA structure together. The combined cluster of proteins S8, S12 and S17 appears to hold together the shoulder and platform of the 30S subunit. This Psychrobacter arcticus (strain DSM 17307 / VKM B-2377 / 273-4) protein is Small ribosomal subunit protein uS12.